The primary structure comprises 260 residues: uncharacterized protein (260 aa).

The stretch at 214–252 (IHQFIETEIERIMEAAKELKAEKKDMTSELNRLLLNTVE) forms a coiled coil.

This is an uncharacterized protein from Bacillus subtilis (strain 168).